A 742-amino-acid polypeptide reads, in one-letter code: Phosphoribosylformylglycinamidine synthase subunit PurL (742 aa).

Histidine 53 is a catalytic residue. 2 residues coordinate ATP: tyrosine 56 and lysine 95. A Mg(2+)-binding site is contributed by glutamate 97. Residues 98–101 (SHNH) and arginine 120 contribute to the substrate site. The active-site Proton acceptor is histidine 99. Aspartate 121 is a Mg(2+) binding site. Glutamine 244 is a substrate binding site. Aspartate 274 contributes to the Mg(2+) binding site. 318–320 (ESQ) contributes to the substrate binding site. Residues aspartate 501 and glycine 538 each contribute to the ATP site. Asparagine 539 is a binding site for Mg(2+). Serine 541 provides a ligand contact to substrate.

The protein belongs to the FGAMS family. In terms of assembly, monomer. Part of the FGAM synthase complex composed of 1 PurL, 1 PurQ and 2 PurS subunits.

The protein resides in the cytoplasm. The enzyme catalyses N(2)-formyl-N(1)-(5-phospho-beta-D-ribosyl)glycinamide + L-glutamine + ATP + H2O = 2-formamido-N(1)-(5-O-phospho-beta-D-ribosyl)acetamidine + L-glutamate + ADP + phosphate + H(+). Its pathway is purine metabolism; IMP biosynthesis via de novo pathway; 5-amino-1-(5-phospho-D-ribosyl)imidazole from N(2)-formyl-N(1)-(5-phospho-D-ribosyl)glycinamide: step 1/2. Its function is as follows. Part of the phosphoribosylformylglycinamidine synthase complex involved in the purines biosynthetic pathway. Catalyzes the ATP-dependent conversion of formylglycinamide ribonucleotide (FGAR) and glutamine to yield formylglycinamidine ribonucleotide (FGAM) and glutamate. The FGAM synthase complex is composed of three subunits. PurQ produces an ammonia molecule by converting glutamine to glutamate. PurL transfers the ammonia molecule to FGAR to form FGAM in an ATP-dependent manner. PurS interacts with PurQ and PurL and is thought to assist in the transfer of the ammonia molecule from PurQ to PurL. The protein is Phosphoribosylformylglycinamidine synthase subunit PurL of Limosilactobacillus reuteri (strain DSM 20016) (Lactobacillus reuteri).